The sequence spans 245 residues: Chlorophyll a-b binding protein 1B-21, chloroplastic (245 aa).

Residues 1 to 44 (MASSSGLRSCSAVGVPSLLAPSSRSGRSGLPFCAYATTSGRVTM) constitute a chloroplast transit peptide. W48 lines the chlorophyll b pocket. Chlorophyll a is bound by residues F68, E87, and H90. R92 contributes to the chlorophyll b binding site. The chain crosses the membrane as a helical span at residues 93-113 (WAMLCVPGVLVPEALGLGNWV). L129 contributes to the chlorophyll a binding site. The helical transmembrane segment at 132–152 (PVPWGNLPTILAIEFLAIAFA) threads the bilayer. Chlorophyll b is bound by residues V133, E153, and R156. Positions 190, 191, 194, 196, 208, and 224 each coordinate chlorophyll a.

Belongs to the light-harvesting chlorophyll a/b-binding (LHC) protein family. As to quaternary structure, the LHC complex consists of chlorophyll a-b binding proteins. Binds at least 14 chlorophylls (8 Chl-a and 6 Chl-b) and carotenoids such as lutein and neoxanthin. is required as a cofactor. Photoregulated by reversible phosphorylation of its threonine residues.

It is found in the plastid. It localises to the chloroplast thylakoid membrane. Functionally, the light-harvesting complex (LHC) functions as a light receptor, it captures and delivers excitation energy to photosystems with which it is closely associated. The protein is Chlorophyll a-b binding protein 1B-21, chloroplastic (LHC Ib-21) of Hordeum vulgare (Barley).